A 397-amino-acid chain; its full sequence is MATDKGLEDIPEGQIESNYDETVDSFDEMNLKPELLRGIYAYGFERPSAIQQRAIMPVIKGHDVIAQAQSGTGKTATFSISVLQKIDPSLKACQALILAPTRELAQQIQKVVVAIGDFMNIECHACIGGTSVRDDMKALQDGPQVVVGTPGRVHDMIQRRFLKTDSMKMFVLDEADEMLSRGFTEQIYDIFQLLPQSTQVVLLSATMPQDVLEVTTKFMREPVRILVKKDELTLEGIKQFYIAVEKEEWKLDTLSDLYETVTITQAVIFCNTRRKVDWLTDKLTARDFTVSAMHGDMDQAQRDLIMKEFRSGSSRVLIATDLLARGIDVQQVSLVINYDLPANRENYIHRIGRGGRFGRKGVAINFVTADDVRMMREIEQFYSTQIEEMPMNVADLI.

The Q motif signature appears at 24-52 (DSFDEMNLKPELLRGIYAYGFERPSAIQQ). The region spanning 55–225 (IMPVIKGHDV…TKFMREPVRI (171 aa)) is the Helicase ATP-binding domain. 68–75 (AQSGTGKT) is an ATP binding site. The short motif at 173–176 (DEAD) is the DEAD box element. In terms of domain architecture, Helicase C-terminal spans 236 to 397 (GIKQFYIAVE…EMPMNVADLI (162 aa)).

It belongs to the DEAD box helicase family. eIF4A subfamily. As to quaternary structure, component of the eIF4F complex, which composition varies with external and internal environmental conditions. It is composed of at least eIF4A, eIF4E and eIF4G.

It localises to the cytoplasm. The enzyme catalyses ATP + H2O = ADP + phosphate + H(+). ATP-dependent RNA helicase which is a subunit of the eIF4F complex involved in cap recognition and is required for mRNA binding to ribosome. In the current model of translation initiation, eIF4A unwinds RNA secondary structures in the 5'-UTR of mRNAs which is necessary to allow efficient binding of the small ribosomal subunit, and subsequent scanning for the initiator codon. The chain is ATP-dependent RNA helicase eIF4A (tif-1) from Neurospora crassa (strain ATCC 24698 / 74-OR23-1A / CBS 708.71 / DSM 1257 / FGSC 987).